The primary structure comprises 135 residues: UPF0355 protein SE_2351 (135 aa).

This sequence belongs to the UPF0355 family.

This is UPF0355 protein SE_2351 from Staphylococcus epidermidis (strain ATCC 12228 / FDA PCI 1200).